Here is a 240-residue protein sequence, read N- to C-terminus: uncharacterized protein (240 aa).

The ABC transporter domain occupies 2–223 (VRIQDLSLAF…GNAPRELHQA (222 aa)). 34–41 (GSSGVGKS) contributes to the ATP binding site.

The protein belongs to the ABC transporter superfamily.

This is an uncharacterized protein from Haemophilus influenzae (strain ATCC 51907 / DSM 11121 / KW20 / Rd).